Consider the following 396-residue polypeptide: Elongation factor Tu (396 aa).

One can recognise a tr-type G domain in the interval 10–206 (KPHCNIGTIG…NVDEYIPQPE (197 aa)). Residues 19–26 (GHVDHGKT) form a G1 region. Position 19–26 (19–26 (GHVDHGKT)) interacts with GTP. Position 26 (T26) interacts with Mg(2+). A G2 region spans residues 60 to 64 (GITIS). The segment at 81–84 (DCPG) is G3. GTP-binding positions include 81–85 (DCPGH) and 136–139 (NKCD). The tract at residues 136 to 139 (NKCD) is G4. The interval 174-176 (SAL) is G5.

This sequence belongs to the TRAFAC class translation factor GTPase superfamily. Classic translation factor GTPase family. EF-Tu/EF-1A subfamily. As to quaternary structure, monomer.

It is found in the cytoplasm. The catalysed reaction is GTP + H2O = GDP + phosphate + H(+). In terms of biological role, GTP hydrolase that promotes the GTP-dependent binding of aminoacyl-tRNA to the A-site of ribosomes during protein biosynthesis. This Bradyrhizobium sp. (strain BTAi1 / ATCC BAA-1182) protein is Elongation factor Tu.